Reading from the N-terminus, the 147-residue chain is Hemoglobin subunit beta-1 (147 aa).

The region spanning 3–147 is the Globin domain; that stretch reads KWSKTELTII…VVSALGKQYH (145 aa). Heme b-binding residues include H64 and H93.

This sequence belongs to the globin family. As to quaternary structure, hb1 is a heterotetramer of two alpha chains and two beta-1 chains. Red blood cells.

Its function is as follows. Involved in oxygen transport from gills to the various peripheral tissues. The sequence is that of Hemoglobin subunit beta-1 (hbb1) from Cygnodraco mawsoni (Antarctic dragonfish).